A 433-amino-acid chain; its full sequence is G2/mitotic-specific cyclin-B1 (433 aa).

Positions 19 to 47 (INMAGAKRVPTAPAATSKPGLRPRTALGD) are disordered. Lys73 bears the N6-acetyllysine mark. Residues 93–116 (PVSEPVPEPEPEPEPEPVKEEKLS) are disordered. Ser126 carries the phosphoserine; by CDK1 modification. Ser128 is subject to Phosphoserine. Ser133 carries the phosphoserine; by PLK1 modification. Ser147 is subject to Phosphoserine. 2 interaction with CDK2 regions span residues 169-177 (EYVKDIYAY) and 258-261 (YEEM). At Thr321 the chain carries Phosphothreonine.

Belongs to the cyclin family. Cyclin AB subfamily. As to quaternary structure, interacts with the CDC2 protein kinase to form a serine/threonine kinase holoenzyme complex also known as maturation promoting factor (MPF). The cyclin subunit imparts substrate specificity to the complex. Binds HEI10. Interacts with catalytically active RALBP1 and CDC2 during mitosis to form an endocytotic complex during interphase. Interacts with CCNF; interaction is required for nuclear localization. Interacts with CDK5RAP3. Interacts with RFPL4A and UBE2A. Interacts with INCA1. In terms of processing, ubiquitinated by the SCF(NIPA) complex during interphase, leading to its destruction. Deubiquitinated by USP22 during G2/M phase. Post-translationally, phosphorylated by PLK1 at Ser-133 on centrosomes during prophase: phosphorylation by PLK1 does not cause nuclear import. Phosphorylation at Ser-147 was also reported to be mediated by PLK1 but Ser-133 seems to be the primary phosphorylation site.

The protein localises to the cytoplasm. Its subcellular location is the nucleus. It is found in the cytoskeleton. The protein resides in the microtubule organizing center. It localises to the centrosome. Its function is as follows. Essential for the control of the cell cycle at the G2/M (mitosis) transition. The sequence is that of G2/mitotic-specific cyclin-B1 (CCNB1) from Homo sapiens (Human).